The primary structure comprises 147 residues: Hemoglobin subunit beta-1 (147 aa).

In terms of domain architecture, Globin spans 3–147; that stretch reads EWTATERTHI…VVSALGRQYH (145 aa). Residues H64 and H93 each contribute to the heme b site.

The protein belongs to the globin family. In terms of assembly, hb 1 is a heterotetramer of two alpha-1 and two beta-1 chains. Hb 2 is a heterotetramer of two alpha-2 and two beta-1 chains. Red blood cells.

In terms of biological role, involved in oxygen transport from gills to the various peripheral tissues. In Boreogadus saida (Polar cod), this protein is Hemoglobin subunit beta-1 (hbb1).